Reading from the N-terminus, the 141-residue chain is Organic hydroperoxide resistance protein-like 1 (141 aa).

Residues 1-20 form a disordered region; that stretch reads MAVNYETKATNTGGRNGHVQ.

The protein belongs to the OsmC/Ohr family.

This is Organic hydroperoxide resistance protein-like 1 from Staphylococcus saprophyticus subsp. saprophyticus (strain ATCC 15305 / DSM 20229 / NCIMB 8711 / NCTC 7292 / S-41).